The primary structure comprises 178 residues: Caveolin-1 (178 aa).

Ser-2 is subject to N-acetylserine. Ser-2 is modified (phosphoserine). Residues 2–94 are required for homooligomerization; the sequence is SGGKYVDAEG…WKASFTTFTV (93 aa). Residues 2 to 104 are Cytoplasmic-facing; it reads SGGKYVDAEG…TKYWFYRLLS (103 aa). Lys-5 bears the N6-acetyllysine; alternate mark. A Glycyl lysine isopeptide (Lys-Gly) (interchain with G-Cter in ubiquitin); alternate cross-link involves residue Lys-5. Tyr-6 carries the post-translational modification Phosphotyrosine. Position 14 is a phosphotyrosine; by ABL1 (Tyr-14). The residue at position 25 (Tyr-25) is a Phosphotyrosine. Glycyl lysine isopeptide (Lys-Gly) (interchain with G-Cter in ubiquitin) cross-links involve residues Lys-26, Lys-30, Lys-39, Lys-47, and Lys-57. Residues 82–94 form an interaction with CAVIN3 region; it reads DGIWKASFTTFTV. An intramembrane region (helical) is located at residues 105 to 125; sequence ALLGIPLALLWGIYFAILSFL. Residues 126–178 are Cytoplasmic-facing; that stretch reads HIWAVVPCIRSYLIEIQCISRVYSICIHTFCDPLFEAIGKVFSNIRATVQKEI. The tract at residues 131–142 is interacts with SPRY1, SPRY2, SPRY3 and SPRY4; the sequence is VPCIRSYLIEIQ. Residues Cys-133, Cys-143, and Cys-156 are each lipidated (S-palmitoyl cysteine). The interval 149–160 is interacts with SPRY1, SPRY2, and SPRY4; it reads SICIHTFCDPLF. The segment at 167-178 is interacts with SPRY1, SPRY2, SPRY3 and SPRY4; the sequence is FSNIRATVQKEI.

Belongs to the caveolin family. As to quaternary structure, homooligomer. Interacts with GLIPR2. Interacts with NOSTRIN. Interacts with SNAP25 and STX1A. Interacts (via the N-terminus) with DPP4; the interaction is direct. Interacts with CTNNB1, CDH1 and JUP. Interacts with PACSIN2; this interaction induces membrane tubulation. Interacts with SLC7A9. Interacts with BMX and BTK. Interacts with TGFBR1. Interacts with CAVIN3 (via leucine-zipper domain) in a cholesterol-sensitive manner. Interacts with CAVIN1. Interacts with EHD2 in a cholesterol-dependent manner. Forms a ternary complex with UBXN6 and VCP; mediates CAV1 targeting to lysosomes for degradation. Interacts with ABCG1; this interaction regulates ABCG1-mediated cholesterol efflux. Interacts with NEU3; this interaction enhances NEU3 sialidase activity within caveola. Interacts (via C-terminus) with SPRY1, SPRY2 (via C-terminus), SPRY3, and SPRY4. Interacts with IGFBP5; this interaction allows trafficking of IGFBP5 from the plasma membrane to the nucleus. Post-translationally, phosphorylated at Tyr-14 by ABL1 in response to oxidative stress. In terms of processing, ubiquitinated. Undergo monoubiquitination and multi- and/or polyubiquitination. Monoubiquitination of N-terminal lysines promotes integration in a ternary complex with UBXN6 and VCP which promotes oligomeric CAV1 targeting to lysosomes for degradation. Ubiquitinated by ZNRF1; leading to degradation and modulation of the TLR4-mediated immune response.

It localises to the golgi apparatus membrane. The protein localises to the cell membrane. The protein resides in the membrane. Its subcellular location is the caveola. It is found in the membrane raft. Its function is as follows. May act as a scaffolding protein within caveolar membranes. Forms a stable heterooligomeric complex with CAV2 that targets to lipid rafts and drives caveolae formation. Mediates the recruitment of CAVIN proteins (CAVIN1/2/3/4) to the caveolae. Interacts directly with G-protein alpha subunits and can functionally regulate their activity. Involved in the costimulatory signal essential for T-cell receptor (TCR)-mediated T-cell activation. Its binding to DPP4 induces T-cell proliferation and NF-kappa-B activation in a T-cell receptor/CD3-dependent manner. Recruits CTNNB1 to caveolar membranes and may regulate CTNNB1-mediated signaling through the Wnt pathway. Negatively regulates TGFB1-mediated activation of SMAD2/3 by mediating the internalization of TGFBR1 from membrane rafts leading to its subsequent degradation. Binds 20(S)-hydroxycholesterol (20(S)-OHC). This chain is Caveolin-1 (CAV1), found in Ornithorhynchus anatinus (Duckbill platypus).